A 100-amino-acid chain; its full sequence is uncharacterized protein (100 aa).

This is an uncharacterized protein from Mycoplasma genitalium (strain ATCC 33530 / DSM 19775 / NCTC 10195 / G37) (Mycoplasmoides genitalium).